The sequence spans 389 residues: Homoserine O-acetyltransferase (389 aa).

An AB hydrolase-1 domain is found at 63 to 371 (NAVLVLHALT…SSDYGHDGFL (309 aa)). The Nucleophile role is filled by S168. R240 contributes to the substrate binding site. Catalysis depends on residues D334 and H367. Residue D368 coordinates substrate.

Belongs to the AB hydrolase superfamily. MetX family. In terms of assembly, homodimer.

It is found in the cytoplasm. The enzyme catalyses L-homoserine + acetyl-CoA = O-acetyl-L-homoserine + CoA. It functions in the pathway amino-acid biosynthesis; L-methionine biosynthesis via de novo pathway; O-acetyl-L-homoserine from L-homoserine: step 1/1. Functionally, transfers an acetyl group from acetyl-CoA to L-homoserine, forming acetyl-L-homoserine. This is Homoserine O-acetyltransferase from Clavibacter michiganensis subsp. michiganensis (strain NCPPB 382).